The chain runs to 96 residues: Cytochrome c oxidase assembly factor 3 homolog, mitochondrial (96 aa).

The Mitochondrial matrix segment spans residues 1–50; it reads MSSQGEPKPEAQFAKRIDPTKEALTKEQLQFIRQVEMAQWKKKTDKLRGR. Residues 51-73 traverse the membrane as a helical segment; it reads NVATGLAIGAVVLGIYGYTFYSV. Over 74–96 the chain is Mitochondrial intermembrane; sequence SQEKIMDEIDEEAKVRVPKTGAN.

Belongs to the COA3 family. Core component of the MITRAC (mitochondrial translation regulation assembly intermediate of cytochrome c oxidase complex) complex.

It is found in the mitochondrion inner membrane. In terms of biological role, core component of the MITRAC (mitochondrial translation regulation assembly intermediate of cytochrome c oxidase complex) complex, that regulates cytochrome c oxidase assembly. MITRAC complexes regulate both translation of mitochondrial encoded components and assembly of nuclear-encoded components imported in mitochondrion. Required for efficient translation of MT-CO1 and mitochondrial respiratory chain complex IV assembly. This is Cytochrome c oxidase assembly factor 3 homolog, mitochondrial (coa3a) from Danio rerio (Zebrafish).